The sequence spans 185 residues: 3-hexulose-6-phosphate isomerase (185 aa).

The region spanning leucine 29–leucine 172 is the SIS domain. Substrate-binding positions include serine 47 and serine 86 to threonine 91. Catalysis depends on glutamate 152, which acts as the Proton acceptor.

Belongs to the SIS family. PHI subfamily. As to quaternary structure, homotetramer.

It carries out the reaction D-arabino-hex-3-ulose 6-phosphate = beta-D-fructose 6-phosphate. The protein operates within one-carbon metabolism; formaldehyde assimilation via RuMP pathway; D-fructose 6-phosphate from D-ribulose 5-phosphate and formaldehyde: step 2/2. In terms of biological role, catalyzes the isomerization between 3-hexulose 6-phosphate and fructose 6-phosphate. Together with HxlA, may act as a formaldehyde detoxification system. In Bacillus subtilis (strain 168), this protein is 3-hexulose-6-phosphate isomerase (hxlB).